The chain runs to 671 residues: Vinexin (671 aa).

Gln-2 bears the N-acetylalanine mark. Arg-6 carries the post-translational modification Phosphoserine. Disordered regions lie at residues 46 to 111, 166 to 215, 249 to 268, 295 to 324, and 337 to 383; these read LNFQ…TKDS, TFEE…RPGA, LETG…EKPS, TRLP…AWSS, and SLSP…KKRK. A compositionally biased stretch (polar residues) spans 88–108; that stretch reads PSASTKIPASQHTQNWSATWT. A SoHo domain is found at 115–187; sequence DKRWVKYEGI…GAQQRPAHRP (73 aa). Ser-348 is subject to Phosphoserine. Polar residues predominate over residues 359 to 368; sequence PSSTRDPSAS. SH3 domains are found at residues 380-439 and 454-515; these read KKRK…VLPA and LEYG…VSRE. The segment at 380 to 515 is binds to vinculin; it reads KKRKAARLKF…PASYVQVSRE (136 aa). Ser-395 is modified (phosphoserine). The segment at 519–611 is disordered; that stretch reads RLCDDGPQLP…LGTSSPNTSQ (93 aa). Ser-530 is subject to Phosphoserine; by MAPK1. Low complexity predominate over residues 535-553; the sequence is AAARSARHPSSPSALRSPA. Ser-544, Ser-545, Ser-547, Ser-551, and Ser-563 each carry phosphoserine. A compositionally biased stretch (polar residues) spans 560–584; that stretch reads GQTSPRRTGFSFPTQEPRPQTQNLG. Residues 612–671 enclose the SH3 3 domain; sequence IHWTPYRAMYQYRPQNEDELELREGDRVDVMQQCDDGWFVGVSRRTQKFGTFPGNYVAPV. A binds to SOS region spans residues 612–671; sequence IHWTPYRAMYQYRPQNEDELELREGDRVDVMQQCDDGWFVGVSRRTQKFGTFPGNYVAPV.

In terms of assembly, interacts with DLG5 through its third SH3 domain. Interacts with vinculin by the first two SH3 domains and the proline rich region of vinculin. Binds to SOS (guanine nucleotide exchange factor of RAS and RAC), through its third SH3 domain. The formation of this complex is down-regulated by phosphorylation of SOS. Interacts with INPPL1/SHIP2, SAFB2, SOCS7 and SRCIN1. Interacts with FASLG. Interacts with MAPK1/ERK2. In terms of processing, phosphorylated at Ser-530 by MAPK1/ERK2 during cell spreading. As to expression, both isoforms are expressed in different tissues like heart, placenta, brain, skeletal muscle and pancreas. Isoform beta is especially found in liver.

The protein resides in the cell junction. The protein localises to the cytoplasm. It is found in the cytoskeleton. It localises to the nucleus. In terms of biological role, vinexin alpha isoform promotes up-regulation of actin stress fiber formation. Vinexin beta isoform plays a role in cell spreading and enhances the activation of JNK/SAPK in response to EGF stimulation by using its third SH3 domain. The polypeptide is Vinexin (SORBS3) (Homo sapiens (Human)).